The primary structure comprises 266 residues: Elongator complex protein 6 (266 aa).

The protein belongs to the ELP6 family. In terms of assembly, component of the elongator complex which consists of ELP1, ELP2, ELP3, ELP4, ELP5 and ELP6.

The protein localises to the cytoplasm. The protein resides in the nucleus. The protein operates within tRNA modification; 5-methoxycarbonylmethyl-2-thiouridine-tRNA biosynthesis. Functionally, component of the elongator complex which is required for multiple tRNA modifications, including mcm5U (5-methoxycarbonylmethyl uridine), mcm5s2U (5-methoxycarbonylmethyl-2-thiouridine), and ncm5U (5-carbamoylmethyl uridine). The elongator complex catalyzes formation of carboxymethyluridine in the wobble base at position 34 in tRNAs. Involved in cell migration. The polypeptide is Elongator complex protein 6 (Elp6) (Rattus norvegicus (Rat)).